Consider the following 1205-residue polypeptide: Bromodomain and PHD finger-containing protein 3 (1205 aa).

Disordered regions lie at residues 1-27 (MRKPRRKSRQNAEGRRSPSPYSLKCSP) and 75-121 (NSNK…SFRM). Residue serine 17 is modified to Phosphoserine. Residues 75-84 (NSNKENSEQP) are compositionally biased toward polar residues. Positions 89–99 (KSKKPSSKGKK) are enriched in basic residues. The PHD-type 1 zinc-finger motif lies at 212-262 (DAFCCVCLDDECHNSNVILFCDICNLAVHQECYGVPYIPEGQWLCRCCLQS). The segment at 266–299 (PVDCILCPNKGGAFKQTSDGHWAHVVCAIWIPEV) adopts a C2HC pre-PHD-type zinc-finger fold. A PHD-type 2 zinc finger spans residues 323 to 387 (LTCYICKQKG…RKTAYCEAHS (65 aa)). The segment at 387–472 (SPPGAATARR…AGQDTPSTLP (86 aa)) is disordered. 2 positions are modified to phosphoserine: serine 400 and serine 403. The segment covering 417-432 (DGEEEEEEEVEEEEQE) has biased composition (acidic residues). Residues 444 to 456 (VPKKSKMSLKQKI) show a composition bias toward basic residues. 3 positions are modified to N6-acetyllysine: lysine 447, lysine 449, and lysine 671. In terms of domain architecture, Bromo spans 589–693 (LELMPFNVLL…DLGGAILRHA (105 aa)). 2 positions are modified to phosphoserine: serine 713 and serine 740. The disordered stretch occupies residues 779 to 897 (RQKLAQPPPP…LQLGNEPLQR (119 aa)). The segment covering 817 to 827 (LQEEPEDDGDR) has biased composition (acidic residues). Residues 839-851 (EPTGPAPSLSEQE) are compositionally biased toward low complexity. Serine 900 is modified (phosphoserine). Disordered stretches follow at residues 907 to 926 (LSLMAPDTPAGTPLSGVGRR) and 931 to 1015 (FKKA…SECS). Residues 942 to 955 (RSPDRVLENGEDHG) are compositionally biased toward basic and acidic residues. Phosphoserine occurs at positions 962 and 965. Residues 980 to 991 (SCSESEGERSPQ) show a composition bias toward basic and acidic residues. A PWWP domain is found at 1076 to 1159 (PLELVWAKCR…RDKVLPLGVE (84 aa)).

As to quaternary structure, component of some HBO1 complex composed of KAT7/HBO1, MEAF6, ING4 or ING5, and BRPF3. Component of the MOZ/MORF complex composed at least of ING5, KAT6A, KAT6B, MEAF6 and one of BRPF1, BRD1/BRPF2 and BRPF3. Interacts with KAT7/HBO1; the interaction is direct.

It localises to the nucleus. Functionally, scaffold subunit of various histone acetyltransferase (HAT) complexes, such as the MOZ/MORF and HBO1 complexes, which have a histone H3 acetyltransferase activity. Plays a role in DNA replication initiation by directing KAT7/HBO1 specificity towards histone H3 'Lys-14' acetylation (H3K14ac), thereby facilitating the activation of replication origins. Component of the MOZ/MORF complex which has a histone H3 acetyltransferase activity. The polypeptide is Bromodomain and PHD finger-containing protein 3 (Homo sapiens (Human)).